Here is a 316-residue protein sequence, read N- to C-terminus: L-lactate dehydrogenase (316 aa).

NAD(+)-binding positions include M14, 14–150 (MIGG…IIGL), I15, D35, Y67, G81, F82, V125, N127, and L150. R95 is a binding site for substrate. 2 residues coordinate substrate: R158 and H182. H182 acts as the Proton acceptor in catalysis.

The protein belongs to the LDH/MDH superfamily. LDH family. Homotetramer.

The enzyme catalyses (S)-lactate + NAD(+) = pyruvate + NADH + H(+). It functions in the pathway fermentation; pyruvate fermentation to lactate; (S)-lactate from pyruvate: step 1/1. The protein is L-lactate dehydrogenase of Plasmodium falciparum (isolate CDC / Honduras).